Consider the following 122-residue polypeptide: Ribosome-binding factor A (122 aa).

Over residues 95–111 the composition is skewed to basic and acidic residues; sequence PTVERVTRIQRTLREVS. Residues 95–122 are disordered; sequence PTVERVTRIQRTLREVSGEDGDGNGTQE.

It belongs to the RbfA family. In terms of assembly, monomer. Binds 30S ribosomal subunits, but not 50S ribosomal subunits or 70S ribosomes.

It is found in the cytoplasm. Functionally, one of several proteins that assist in the late maturation steps of the functional core of the 30S ribosomal subunit. Associates with free 30S ribosomal subunits (but not with 30S subunits that are part of 70S ribosomes or polysomes). Required for efficient processing of 16S rRNA. May interact with the 5'-terminal helix region of 16S rRNA. In Rubrobacter xylanophilus (strain DSM 9941 / JCM 11954 / NBRC 16129 / PRD-1), this protein is Ribosome-binding factor A.